The primary structure comprises 215 residues: Adenylate kinase (215 aa).

10-15 (GAGKGT) is a binding site for ATP. Positions 30–59 (STGDMLRAAVKAGTELGLKAKSVMDSGGLV) are NMP. Residues Thr31, Arg36, 57-59 (GLV), 85-88 (GFPR), and Gln92 contribute to the AMP site. Residues 122–159 (GRRVHEASGRVYHTVYNPPKIAGKDDITGEDLVQRKDD) form an LID region. Residues Arg123 and 132–133 (VY) contribute to the ATP site. AMP is bound by residues Arg156 and Arg167. Gly201 is an ATP binding site.

The protein belongs to the adenylate kinase family. As to quaternary structure, monomer.

The protein resides in the cytoplasm. The catalysed reaction is AMP + ATP = 2 ADP. It participates in purine metabolism; AMP biosynthesis via salvage pathway; AMP from ADP: step 1/1. In terms of biological role, catalyzes the reversible transfer of the terminal phosphate group between ATP and AMP. Plays an important role in cellular energy homeostasis and in adenine nucleotide metabolism. The polypeptide is Adenylate kinase (Pseudomonas fluorescens (strain ATCC BAA-477 / NRRL B-23932 / Pf-5)).